A 227-amino-acid chain; its full sequence is Phosphoribosylformylglycinamidine synthase subunit PurQ (227 aa).

The Glutamine amidotransferase type-1 domain occupies 2 to 226 (KFAVIQFPGS…VKAWKEEQVN (225 aa)). Catalysis depends on Cys-86, which acts as the Nucleophile. Catalysis depends on residues His-195 and Glu-197.

In terms of assembly, part of the FGAM synthase complex composed of 1 PurL, 1 PurQ and 2 PurS subunits.

The protein localises to the cytoplasm. The catalysed reaction is N(2)-formyl-N(1)-(5-phospho-beta-D-ribosyl)glycinamide + L-glutamine + ATP + H2O = 2-formamido-N(1)-(5-O-phospho-beta-D-ribosyl)acetamidine + L-glutamate + ADP + phosphate + H(+). It carries out the reaction L-glutamine + H2O = L-glutamate + NH4(+). The protein operates within purine metabolism; IMP biosynthesis via de novo pathway; 5-amino-1-(5-phospho-D-ribosyl)imidazole from N(2)-formyl-N(1)-(5-phospho-D-ribosyl)glycinamide: step 1/2. Part of the phosphoribosylformylglycinamidine synthase complex involved in the purines biosynthetic pathway. Catalyzes the ATP-dependent conversion of formylglycinamide ribonucleotide (FGAR) and glutamine to yield formylglycinamidine ribonucleotide (FGAM) and glutamate. The FGAM synthase complex is composed of three subunits. PurQ produces an ammonia molecule by converting glutamine to glutamate. PurL transfers the ammonia molecule to FGAR to form FGAM in an ATP-dependent manner. PurS interacts with PurQ and PurL and is thought to assist in the transfer of the ammonia molecule from PurQ to PurL. This is Phosphoribosylformylglycinamidine synthase subunit PurQ from Listeria monocytogenes serotype 4b (strain CLIP80459).